A 115-amino-acid polypeptide reads, in one-letter code: UPF0102 protein NMCC_2054 (115 aa).

The protein belongs to the UPF0102 family.

This Neisseria meningitidis serogroup C (strain 053442) protein is UPF0102 protein NMCC_2054.